A 367-amino-acid polypeptide reads, in one-letter code: Phosphoribosylaminoimidazole-succinocarboxamide synthase (367 aa).

Belongs to the SAICAR synthetase family.

The enzyme catalyses 5-amino-1-(5-phospho-D-ribosyl)imidazole-4-carboxylate + L-aspartate + ATP = (2S)-2-[5-amino-1-(5-phospho-beta-D-ribosyl)imidazole-4-carboxamido]succinate + ADP + phosphate + 2 H(+). It participates in purine metabolism; IMP biosynthesis via de novo pathway; 5-amino-1-(5-phospho-D-ribosyl)imidazole-4-carboxamide from 5-amino-1-(5-phospho-D-ribosyl)imidazole-4-carboxylate: step 1/2. The chain is Phosphoribosylaminoimidazole-succinocarboxamide synthase from Colwellia psychrerythraea (strain 34H / ATCC BAA-681) (Vibrio psychroerythus).